The following is a 267-amino-acid chain: Ribonuclease HII (267 aa).

The RNase H type-2 domain occupies 57-245 (WPVAGCDEVG…VVAARERHRA (189 aa)). A divalent metal cation contacts are provided by Asp63, Glu64, and Asp154.

This sequence belongs to the RNase HII family. Mn(2+) serves as cofactor. Requires Mg(2+) as cofactor.

It is found in the cytoplasm. The enzyme catalyses Endonucleolytic cleavage to 5'-phosphomonoester.. Its function is as follows. Endonuclease that specifically degrades the RNA of RNA-DNA hybrids. This is Ribonuclease HII from Nitrobacter hamburgensis (strain DSM 10229 / NCIMB 13809 / X14).